Reading from the N-terminus, the 413-residue chain is RNA-binding protein 41 (413 aa).

Over residues 223 to 235 (SVGDSGTAESPSL) the composition is skewed to polar residues. The tract at residues 223–247 (SVGDSGTAESPSLLQDKGKQAAQGK) is disordered. The residue at position 232 (Ser232) is a Phosphoserine. In terms of domain architecture, RRM spans 309–387 (KVLYLKNLSP…KILVIEFGKN (79 aa)).

In terms of biological role, may bind RNA. In Homo sapiens (Human), this protein is RNA-binding protein 41 (RBM41).